The chain runs to 248 residues: uncharacterized protein (248 aa).

To M.jannaschii MJ1452.

This is an uncharacterized protein from Methanothermobacter thermautotrophicus (strain ATCC 29096 / DSM 1053 / JCM 10044 / NBRC 100330 / Delta H) (Methanobacterium thermoautotrophicum).